The primary structure comprises 126 residues: Histone H2B 3 (126 aa).

A compositionally biased stretch (low complexity) spans 1–12; the sequence is MPEPAKSAPAPK. Residues 1-34 are disordered; sequence MPEPAKSAPAPKKGSKKAVTKTQKKGDKKRRKTR. N6-acetyllysine is present on residues Lys6 and Lys13. Residues 13–34 are compositionally biased toward basic residues; that stretch reads KGSKKAVTKTQKKGDKKRRKTR. A Phosphoserine modification is found at Ser15. Residues Lys16 and Lys21 each carry the N6-acetyllysine modification. Ser113 is a glycosylation site (O-linked (GlcNAc) serine). A Glycyl lysine isopeptide (Lys-Gly) (interchain with G-Cter in ubiquitin) cross-link involves residue Lys121.

Belongs to the histone H2B family. In terms of assembly, the nucleosome is a histone octamer containing two molecules each of H2A, H2B, H3 and H4 assembled in one H3-H4 heterotetramer and two H2A-H2B heterodimers. The octamer wraps approximately 147 bp of DNA. Post-translationally, monoubiquitination of Lys-121 by the BRE1 gives a specific tag for epigenetic transcriptional activation and is also prerequisite for histone H3 'Lys-4' and 'Lys-79' methylation. Phosphorylated on Ser-15 during apoptosis; which facilitates apoptotic chromatin condensation. In terms of processing, glcNAcylation at Ser-113 promotes monoubiquitination of Lys-121. It fluctuates in response to extracellular glucose, and associates with transcribed genes.

It localises to the nucleus. Its subcellular location is the chromosome. In terms of biological role, core component of nucleosome. Nucleosomes wrap and compact DNA into chromatin, limiting DNA accessibility to the cellular machineries which require DNA as a template. Histones thereby play a central role in transcription regulation, DNA repair, DNA replication and chromosomal stability. DNA accessibility is regulated via a complex set of post-translational modifications of histones, also called histone code, and nucleosome remodeling. The polypeptide is Histone H2B 3 (hist2h2l) (Danio rerio (Zebrafish)).